Consider the following 403-residue polypeptide: Enoyl-[acyl-carrier-protein] reductase [NADH] (403 aa).

NAD(+)-binding positions include 49 to 54, 75 to 76, 112 to 113, and 141 to 142; these read GASSGY, FE, DA, and LA. Residue Tyr-227 coordinates substrate. Residue Tyr-237 is the Proton donor of the active site. Residues Lys-246 and 276-278 contribute to the NAD(+) site; that span reads VVT.

The protein belongs to the TER reductase family. As to quaternary structure, monomer.

The catalysed reaction is a 2,3-saturated acyl-[ACP] + NAD(+) = a (2E)-enoyl-[ACP] + NADH + H(+). It participates in lipid metabolism; fatty acid biosynthesis. Its function is as follows. Involved in the final reduction of the elongation cycle of fatty acid synthesis (FAS II). Catalyzes the reduction of a carbon-carbon double bond in an enoyl moiety that is covalently linked to an acyl carrier protein (ACP). The sequence is that of Enoyl-[acyl-carrier-protein] reductase [NADH] from Pseudomonas putida (strain GB-1).